The chain runs to 89 residues: Small ribosomal subunit protein uS15 (89 aa).

Residues 1-11 are compositionally biased toward basic and acidic residues; the sequence is MSITAERKAEV. The disordered stretch occupies residues 1-25; the sequence is MSITAERKAEVIKTNARKSGDTGSP.

The protein belongs to the universal ribosomal protein uS15 family. As to quaternary structure, part of the 30S ribosomal subunit. Forms a bridge to the 50S subunit in the 70S ribosome, contacting the 23S rRNA.

Functionally, one of the primary rRNA binding proteins, it binds directly to 16S rRNA where it helps nucleate assembly of the platform of the 30S subunit by binding and bridging several RNA helices of the 16S rRNA. Forms an intersubunit bridge (bridge B4) with the 23S rRNA of the 50S subunit in the ribosome. This chain is Small ribosomal subunit protein uS15, found in Nitrobacter hamburgensis (strain DSM 10229 / NCIMB 13809 / X14).